A 201-amino-acid polypeptide reads, in one-letter code: Large ribosomal subunit protein bL25 (201 aa).

Positions 179-201 (VSITAPRVEAEKTEEEEPESTEE) are disordered. Positions 190–201 (KTEEEEPESTEE) are enriched in acidic residues.

This sequence belongs to the bacterial ribosomal protein bL25 family. CTC subfamily. In terms of assembly, part of the 50S ribosomal subunit; part of the 5S rRNA/L5/L18/L25 subcomplex. Contacts the 5S rRNA. Binds to the 5S rRNA independently of L5 and L18.

In terms of biological role, this is one of the proteins that binds to the 5S RNA in the ribosome where it forms part of the central protuberance. This Prosthecochloris aestuarii (strain DSM 271 / SK 413) protein is Large ribosomal subunit protein bL25.